We begin with the raw amino-acid sequence, 201 residues long: Glycine-rich protein 23 (201 aa).

Residues 1-24 (MGLISGKVCVFIFVFALVAEFSFG) form the signal peptide. 21 repeat units span residues 62–67 (GLGGGG), 68–73 (GLGGGG), 74–79 (GLGGGG), 80–85 (GLGGGG), 86–91 (GLGGGG), 92–97 (GLGGGG), 98–103 (GLGGGS), 104–109 (GLGGGG), 110–115 (GLGGGS), 116–121 (GLGGGG), 122–129 (GLGGGGGG), 130–135 (GLGGGG), 136–143 (GLGGGAGG), 144–151 (GYGGGAGG), 152–157 (GLGGGG), 158–163 (GIGGGG), 164–169 (GFGGGG), 170–175 (GGGFGG), 176–182 (GAGGGFG), 184–189 (GIGGGG), and 190–194 (GLGGG). The tract at residues 62-194 (GLGGGGGLGG…IGGGGGLGGG (133 aa)) is 21 X 6 AA approximate tandem repeats of G-L-G-G-G-G, Gly-rich.

The sequence is that of Glycine-rich protein 23 from Arabidopsis thaliana (Mouse-ear cress).